We begin with the raw amino-acid sequence, 182 residues long: SAGA-associated factor 11 homolog (182 aa).

The interval Gly-61 to Thr-84 is disordered. The SGF11-type zinc finger occupies Cys-98–Cys-119. Residues Arg-133 to Ser-182 are disordered. Positions Gly-148 to Trp-158 are enriched in acidic residues.

This sequence belongs to the SGF11 family. Component of some SAGA transcription coactivator-HAT complexes. Within the SAGA complex, participates in a subcomplex of SAGA called the DUB module (deubiquitination module).

It is found in the nucleus. In terms of biological role, component of the transcription regulatory histone acetylation (HAT) complex SAGA, a multiprotein complex that activates transcription by remodeling chromatin and mediating histone acetylation and deubiquitination. Within the SAGA complex, participates in a subcomplex that specifically deubiquitinates histone H2B. The SAGA complex is recruited to specific gene promoters by activators, where it is required for transcription. The polypeptide is SAGA-associated factor 11 homolog (Anopheles gambiae (African malaria mosquito)).